The following is a 719-amino-acid chain: Ribosomal RNA large subunit methyltransferase K/L (719 aa).

The THUMP domain occupies 43 to 154 (IGYKACLWSR…KGKANITLDL (112 aa)).

This sequence belongs to the methyltransferase superfamily. RlmKL family.

It localises to the cytoplasm. It catalyses the reaction guanosine(2445) in 23S rRNA + S-adenosyl-L-methionine = N(2)-methylguanosine(2445) in 23S rRNA + S-adenosyl-L-homocysteine + H(+). The enzyme catalyses guanosine(2069) in 23S rRNA + S-adenosyl-L-methionine = N(2)-methylguanosine(2069) in 23S rRNA + S-adenosyl-L-homocysteine + H(+). Specifically methylates the guanine in position 2445 (m2G2445) and the guanine in position 2069 (m7G2069) of 23S rRNA. This is Ribosomal RNA large subunit methyltransferase K/L from Aeromonas salmonicida (strain A449).